We begin with the raw amino-acid sequence, 449 residues long: Glucose-6-phosphate isomerase (449 aa).

Glu291 (proton donor) is an active-site residue. Residues His312 and Lys426 contribute to the active site.

This sequence belongs to the GPI family.

The protein localises to the cytoplasm. It carries out the reaction alpha-D-glucose 6-phosphate = beta-D-fructose 6-phosphate. The protein operates within carbohydrate biosynthesis; gluconeogenesis. Its pathway is carbohydrate degradation; glycolysis; D-glyceraldehyde 3-phosphate and glycerone phosphate from D-glucose: step 2/4. In terms of biological role, catalyzes the reversible isomerization of glucose-6-phosphate to fructose-6-phosphate. The polypeptide is Glucose-6-phosphate isomerase (Streptococcus pyogenes serotype M2 (strain MGAS10270)).